The following is a 98-amino-acid chain: NADH-ubiquinone oxidoreductase chain 4L (98 aa).

A run of 3 helical transmembrane segments spans residues 1–21 (MNLIDLILIAIYVIGISGLIF), 26–46 (IINILIISELNLGTLGMLFVL), and 61–81 (LYILTFTAAESAIGLAIVVIL).

This sequence belongs to the complex I subunit 4L family.

The protein localises to the mitochondrion membrane. The catalysed reaction is a ubiquinone + NADH + 5 H(+)(in) = a ubiquinol + NAD(+) + 4 H(+)(out). Functionally, core subunit of the mitochondrial membrane respiratory chain NADH dehydrogenase (Complex I) that is believed to belong to the minimal assembly required for catalysis. Complex I functions in the transfer of electrons from NADH to the respiratory chain. The immediate electron acceptor for the enzyme is believed to be ubiquinone. The protein is NADH-ubiquinone oxidoreductase chain 4L (nad4L) of Dictyostelium citrinum (Slime mold).